Here is a 491-residue protein sequence, read N- to C-terminus: Bifunctional protein HldE (491 aa).

Positions 1 to 330 are ribokinase; it reads MDRKMVESLF…AAVSLEHRDS (330 aa). 205-208 is an ATP binding site; sequence NRKE. Asp-275 is an active-site residue. Positions 356 to 491 are cytidylyltransferase; the sequence is FTNGCFDLLH…KVLERYTDEQ (136 aa).

The protein in the N-terminal section; belongs to the carbohydrate kinase PfkB family. It in the C-terminal section; belongs to the cytidylyltransferase family. As to quaternary structure, homodimer.

It carries out the reaction D-glycero-beta-D-manno-heptose 7-phosphate + ATP = D-glycero-beta-D-manno-heptose 1,7-bisphosphate + ADP + H(+). The enzyme catalyses D-glycero-beta-D-manno-heptose 1-phosphate + ATP + H(+) = ADP-D-glycero-beta-D-manno-heptose + diphosphate. The protein operates within nucleotide-sugar biosynthesis; ADP-L-glycero-beta-D-manno-heptose biosynthesis; ADP-L-glycero-beta-D-manno-heptose from D-glycero-beta-D-manno-heptose 7-phosphate: step 1/4. It functions in the pathway nucleotide-sugar biosynthesis; ADP-L-glycero-beta-D-manno-heptose biosynthesis; ADP-L-glycero-beta-D-manno-heptose from D-glycero-beta-D-manno-heptose 7-phosphate: step 3/4. Its function is as follows. Catalyzes the phosphorylation of D-glycero-D-manno-heptose 7-phosphate at the C-1 position to selectively form D-glycero-beta-D-manno-heptose-1,7-bisphosphate. In terms of biological role, catalyzes the ADP transfer from ATP to D-glycero-beta-D-manno-heptose 1-phosphate, yielding ADP-D-glycero-beta-D-manno-heptose. This is Bifunctional protein HldE from Trichlorobacter lovleyi (strain ATCC BAA-1151 / DSM 17278 / SZ) (Geobacter lovleyi).